We begin with the raw amino-acid sequence, 414 residues long: MFRLTDFTYHGKTVFLRADLNSPVKDGRIISDARFRAVLPTIQHLLDEGAKLVIGTHQSKPYKGDYITTEQHAEILSNLLGQEVEYVEDIFGKYARERIKTLKPGEAIILENLRFAAEDVKYKPLEECERTHFVRKLAPLLDYVVNDAFAAAHRSQPSLVGLARLKPMIMGFLMEKEVEALSRAYETNEKPRIYVLGGAKVDDSLRVAENVLRNGRADLILTGGLVGHVFTLAKGFHLGDANLEFMAKKGLLELVDWAENILDEFYPYVRTPVDFAVDYKGERVEVDLLSDEKWLFDKYPILDIGSRTIEKYRDVLMNARVIVANGPMGVFEREEFALGTVGVFRAIGESQAFSVVGGGHSIASIYQYNITGISHVSTGGGAMLSFFSGEKLPILEAFRISYERFKDKIERGPK.

Substrate is bound by residues 19-21, arginine 34, 57-60, arginine 114, and arginine 154; these read DLN and HQSK. ATP contacts are provided by residues glutamate 332 and 358–361; that span reads GGHS.

The protein belongs to the phosphoglycerate kinase family. In terms of assembly, monomer.

The protein localises to the cytoplasm. It catalyses the reaction (2R)-3-phosphoglycerate + ATP = (2R)-3-phospho-glyceroyl phosphate + ADP. The protein operates within carbohydrate degradation; glycolysis; pyruvate from D-glyceraldehyde 3-phosphate: step 2/5. This Thermococcus onnurineus (strain NA1) protein is Phosphoglycerate kinase.